The chain runs to 801 residues: Na(+)/H(+) antiporter subunit A (801 aa).

Helical transmembrane passes span 4–21 (LHLA…IPFL), 28–50 (VHTG…PMIR), 80–102 (GLLF…IFYL), 109–128 (LGPF…GVVL), 132–154 (VMVL…GYWY), 166–188 (SLLI…YLIT), 203–222 (IAGH…GAFT), 229–251 (FYIW…HSAT), 266–288 (IFAF…MVWG), 301–323 (ILAF…SAAA), 338–360 (AAIF…VGII), 372–394 (LGGL…FSMA), 428–450 (VLFP…KLLF), 471–493 (VGML…FPNI), 526–548 (GVTT…YLSL), 594–616 (YLLY…KGGF), 626–647 (IGVY…TVFA), 654–671 (IIAL…FVIF), 676–698 (LALT…FYHL), 710–732 (FRMT…GIAS), and 772–789 (MFEI…YSMI).

It belongs to the CPA3 antiporters (TC 2.A.63) subunit A family. In terms of assembly, forms a heterooligomeric complex that consists of seven subunits: MrpA, MrpB, MrpC, MrpD, MrpE, MrpF and MrpG.

Its subcellular location is the cell membrane. Mrp complex is a Na(+)/H(+) antiporter that is considered to be the major Na(+) excretion system in B.subtilis. Has a major role in Na(+) resistance and a minor role in Na(+)- and K(+)-dependent pH homeostasis as compared to TetB. MrpA may be the actual Na(+)/H(+) antiporter, although the six other Mrp proteins are all required for Na(+)/H(+) antiport activity and Na(+) resistance. MrpA is required for initiation of sporulation when external Na(+) concentration increases. Also transports Li(+) but not K(+), Ca(2+) or Mg(2+). This Bacillus subtilis (strain 168) protein is Na(+)/H(+) antiporter subunit A (mrpA).